We begin with the raw amino-acid sequence, 72 residues long: Translation initiation factor IF-1 (72 aa).

Positions 1–72 constitute an S1-like domain; the sequence is MAKEGAIEVE…TRGRIVYRYK (72 aa).

The protein belongs to the IF-1 family. In terms of assembly, component of the 30S ribosomal translation pre-initiation complex which assembles on the 30S ribosome in the order IF-2 and IF-3, IF-1 and N-formylmethionyl-tRNA(fMet); mRNA recruitment can occur at any time during PIC assembly.

It is found in the cytoplasm. Functionally, one of the essential components for the initiation of protein synthesis. Stabilizes the binding of IF-2 and IF-3 on the 30S subunit to which N-formylmethionyl-tRNA(fMet) subsequently binds. Helps modulate mRNA selection, yielding the 30S pre-initiation complex (PIC). Upon addition of the 50S ribosomal subunit IF-1, IF-2 and IF-3 are released leaving the mature 70S translation initiation complex. This is Translation initiation factor IF-1 from Corynebacterium glutamicum (strain R).